A 209-amino-acid polypeptide reads, in one-letter code: Small ribosomal subunit protein uS4 (209 aa).

Residues 23 to 46 (SRNPLLKKPHPPGQHGMQRKKKSD) form a disordered region. One can recognise an S4 RNA-binding domain in the interval 93–153 (CRLDNMVYRM…EKSKRLQSVK (61 aa)).

The protein belongs to the universal ribosomal protein uS4 family. As to quaternary structure, part of the 30S ribosomal subunit. Contacts protein S5. The interaction surface between S4 and S5 is involved in control of translational fidelity.

In terms of biological role, one of the primary rRNA binding proteins, it binds directly to 16S rRNA where it nucleates assembly of the body of the 30S subunit. Its function is as follows. With S5 and S12 plays an important role in translational accuracy. The sequence is that of Small ribosomal subunit protein uS4 from Chlamydia pneumoniae (Chlamydophila pneumoniae).